A 140-amino-acid polypeptide reads, in one-letter code: Nucleoside diphosphate kinase (140 aa).

The ATP site is built by Lys-11, Phe-59, Arg-87, Thr-93, Arg-104, and Asn-114. His-117 acts as the Pros-phosphohistidine intermediate in catalysis.

It belongs to the NDK family. In terms of assembly, homotetramer. Mg(2+) serves as cofactor.

The protein resides in the cytoplasm. The catalysed reaction is a 2'-deoxyribonucleoside 5'-diphosphate + ATP = a 2'-deoxyribonucleoside 5'-triphosphate + ADP. It carries out the reaction a ribonucleoside 5'-diphosphate + ATP = a ribonucleoside 5'-triphosphate + ADP. Functionally, major role in the synthesis of nucleoside triphosphates other than ATP. The ATP gamma phosphate is transferred to the NDP beta phosphate via a ping-pong mechanism, using a phosphorylated active-site intermediate. This is Nucleoside diphosphate kinase from Methylobacterium nodulans (strain LMG 21967 / CNCM I-2342 / ORS 2060).